The following is a 196-amino-acid chain: Imidazoleglycerol-phosphate dehydratase (196 aa).

It belongs to the imidazoleglycerol-phosphate dehydratase family.

It is found in the cytoplasm. The catalysed reaction is D-erythro-1-(imidazol-4-yl)glycerol 3-phosphate = 3-(imidazol-4-yl)-2-oxopropyl phosphate + H2O. The protein operates within amino-acid biosynthesis; L-histidine biosynthesis; L-histidine from 5-phospho-alpha-D-ribose 1-diphosphate: step 6/9. This chain is Imidazoleglycerol-phosphate dehydratase, found in Clostridium botulinum (strain ATCC 19397 / Type A).